We begin with the raw amino-acid sequence, 535 residues long: Flavin-containing monooxygenase 1 (535 aa).

Ala-2 bears the N-acetylalanine mark. The Lumenal portion of the chain corresponds to 2 to 513 (AKRVAIVGAG…TRIVQESSSP (512 aa)). FAD is bound by residues 9 to 13 (GAGVS), Glu-32, 40 to 41 (LW), and 61 to 62 (NS). NADP(+) is bound by residues 60–61 (SN) and 195–198 (SGTD). A helical transmembrane segment spans residues 514 to 534 (FESLLKLFAVLALLVSVFLIF). Residue Leu-535 is a topological domain, cytoplasmic.

The protein belongs to the FMO family. It depends on FAD as a cofactor. Liver.

It is found in the endoplasmic reticulum membrane. It catalyses the reaction hypotaurine + NADPH + O2 + H(+) = taurine + NADP(+) + H2O. The enzyme catalyses hypotaurine + NADH + O2 + H(+) = taurine + NAD(+) + H2O. It carries out the reaction trimethylamine + NADPH + O2 = trimethylamine N-oxide + NADP(+) + H2O. The catalysed reaction is N,N-dimethylaniline + NADPH + O2 + H(+) = N,N-dimethylaniline N-oxide + NADP(+) + H2O. Functionally, broad spectrum monooxygenase that catalyzes the oxygenation of a wide variety of nitrogen- and sulfur-containing compounds including xenobiotics. Catalyzes the S-oxygenation of hypotaurine to produce taurine, an organic osmolyte involved in cell volume regulation as well as a variety of cytoprotective and developmental processes. In vitro, catalyzes the N-oxygenation of trimethylamine (TMA) to produce trimethylamine N-oxide (TMAO) and could therefore participate to the detoxification of this compound that is generated by the action of gut microbiota from dietary precursors such as choline, choline containing compounds, betaine or L-carnitine. The sequence is that of Flavin-containing monooxygenase 1 (FMO1) from Oryctolagus cuniculus (Rabbit).